Here is a 174-residue protein sequence, read N- to C-terminus: Peptide methionine sulfoxide reductase MsrA (174 aa).

Residue Cys-11 is part of the active site.

This sequence belongs to the MsrA Met sulfoxide reductase family.

It catalyses the reaction L-methionyl-[protein] + [thioredoxin]-disulfide + H2O = L-methionyl-(S)-S-oxide-[protein] + [thioredoxin]-dithiol. The enzyme catalyses [thioredoxin]-disulfide + L-methionine + H2O = L-methionine (S)-S-oxide + [thioredoxin]-dithiol. Its function is as follows. Has an important function as a repair enzyme for proteins that have been inactivated by oxidation. Catalyzes the reversible oxidation-reduction of methionine sulfoxide in proteins to methionine. The sequence is that of Peptide methionine sulfoxide reductase MsrA from Pasteurella multocida (strain Pm70).